The chain runs to 69 residues: MAQDLSEKDLLKMEVEQLKKEVKNTRIPISKAGKEIKEYVEAQAGNDPFLKGIPEDKNPFKEKGGCLIS.

Position 66 is a cysteine methyl ester (C66). C66 carries the S-farnesyl cysteine lipid modification. Positions 67–69 are cleaved as a propeptide — removed in mature form; that stretch reads LIS.

Belongs to the G protein gamma family. As to quaternary structure, g proteins are composed of 3 units, alpha, beta and gamma. In terms of tissue distribution, retinal cones.

The protein localises to the cell membrane. Functionally, guanine nucleotide-binding proteins (G proteins) are involved as a modulator or transducer in various transmembrane signaling systems. The beta and gamma chains are required for the GTPase activity, for replacement of GDP by GTP, and for G protein-effector interaction. This chain is Guanine nucleotide-binding protein G(I)/G(S)/G(O) subunit gamma-T2 (GNGT2), found in Homo sapiens (Human).